We begin with the raw amino-acid sequence, 490 residues long: Glucose-6-phosphate 1-dehydrogenase (490 aa).

NADP(+)-binding positions include R49, 91 to 92, and K146; that span reads DV. Substrate-binding residues include H176, K180, E214, and D233. The Proton acceptor role is filled by H238. Substrate is bound by residues K338 and K343.

The protein belongs to the glucose-6-phosphate dehydrogenase family.

The catalysed reaction is D-glucose 6-phosphate + NADP(+) = 6-phospho-D-glucono-1,5-lactone + NADPH + H(+). It participates in carbohydrate degradation; pentose phosphate pathway; D-ribulose 5-phosphate from D-glucose 6-phosphate (oxidative stage): step 1/3. Catalyzes the oxidation of glucose 6-phosphate to 6-phosphogluconolactone. This chain is Glucose-6-phosphate 1-dehydrogenase, found in Buchnera aphidicola subsp. Schizaphis graminum (strain Sg).